A 285-amino-acid chain; its full sequence is Urease accessory protein UreD (285 aa).

It belongs to the UreD family. UreD, UreF and UreG form a complex that acts as a GTP-hydrolysis-dependent molecular chaperone, activating the urease apoprotein by helping to assemble the nickel containing metallocenter of UreC. The UreE protein probably delivers the nickel.

Its subcellular location is the cytoplasm. Required for maturation of urease via the functional incorporation of the urease nickel metallocenter. This Picosynechococcus sp. (strain ATCC 27264 / PCC 7002 / PR-6) (Agmenellum quadruplicatum) protein is Urease accessory protein UreD.